The sequence spans 259 residues: Protein unc-50 homolog B (259 aa).

Polar residues predominate over residues 1 to 11 (MLPTTSVSPRS). Positions 1 to 21 (MLPTTSVSPRSPDNGILSPRD) are disordered. Topologically, residues 1–82 (MLPTTSVSPR…TKDQWARDDP (82 aa)) are cytoplasmic. The chain crosses the membrane as a helical span at residues 83-103 (AFLVLLGIWLCVSTVGFGFVL). The Lumenal segment spans residues 104 to 109 (DMSFFE). Residues 110–130 (TFTLLLWVVFIDCVGVGLLIA) traverse the membrane as a helical segment. Over 131-158 (TSMWFVSNKYMVNRQGKDYDVEWGYTFD) the chain is Cytoplasmic. Residues 159 to 179 (VHLNAFYPLLVILHFIQLFFI) form a helical membrane-spanning segment. At 180–181 (NH) the chain is on the lumenal side. The helical transmembrane segment at 182-202 (VILTGWFIGCFVGNTLWLIAI) threads the bilayer. The Cytoplasmic portion of the chain corresponds to 203-222 (GYYIYITFLGYSALPFLKNT). Residues 223–243 (VVLLYPFAALALLYILSLALG) traverse the membrane as a helical segment. Over 244-259 (WNFTAKLCLFYKYRVR) the chain is Lumenal.

The protein belongs to the unc-50 family.

Its subcellular location is the nucleus inner membrane. It is found in the golgi apparatus membrane. Involved in the cell surface expression of neuronal nicotinic receptors. Binds RNA. This Xenopus laevis (African clawed frog) protein is Protein unc-50 homolog B (unc50-b).